Consider the following 285-residue polypeptide: Pantothenate synthetase (285 aa).

Residue 30-37 (MGNLHRGH) participates in ATP binding. Histidine 37 functions as the Proton donor in the catalytic mechanism. Glutamine 61 is a (R)-pantoate binding site. Residue glutamine 61 participates in beta-alanine binding. 149–152 (GRKD) provides a ligand contact to ATP. Residue glutamine 155 participates in (R)-pantoate binding. ATP contacts are provided by residues valine 178 and 186 to 189 (LSSR).

It belongs to the pantothenate synthetase family. Homodimer.

It is found in the cytoplasm. The enzyme catalyses (R)-pantoate + beta-alanine + ATP = (R)-pantothenate + AMP + diphosphate + H(+). It participates in cofactor biosynthesis; (R)-pantothenate biosynthesis; (R)-pantothenate from (R)-pantoate and beta-alanine: step 1/1. In terms of biological role, catalyzes the condensation of pantoate with beta-alanine in an ATP-dependent reaction via a pantoyl-adenylate intermediate. The protein is Pantothenate synthetase of Halorhodospira halophila (strain DSM 244 / SL1) (Ectothiorhodospira halophila (strain DSM 244 / SL1)).